The primary structure comprises 832 residues: Alpha-glucan phosphorylase, H isozyme (832 aa).

Lys-678 carries the N6-(pyridoxal phosphate)lysine modification.

It belongs to the glycogen phosphorylase family. It depends on pyridoxal 5'-phosphate as a cofactor.

The protein resides in the cytoplasm. It catalyses the reaction [(1-&gt;4)-alpha-D-glucosyl](n) + phosphate = [(1-&gt;4)-alpha-D-glucosyl](n-1) + alpha-D-glucose 1-phosphate. In terms of biological role, phosphorylase is an important allosteric enzyme in carbohydrate metabolism. Enzymes from different sources differ in their regulatory mechanisms and in their natural substrates. However, all known phosphorylases share catalytic and structural properties. This Triticum aestivum (Wheat) protein is Alpha-glucan phosphorylase, H isozyme.